A 220-amino-acid chain; its full sequence is Ribonuclease P protein subunit p29 (220 aa).

Residue Ser10 is modified to Phosphoserine.

Belongs to the eukaryotic/archaeal RNase P protein component 1 family. Component of nuclear RNase P and RNase MRP ribonucleoproteins. RNase P consists of a catalytic RNA moiety and 10 different protein chains; POP1, POP4, POP5, POP7, RPP14, RPP21, RPP25, RPP30, RPP38 and RPP40. Within the RNase P complex, POP1, POP7 and RPP25 form the 'finger' subcomplex, POP5, RPP14, RPP40 and homodimeric RPP30 form the 'palm' subcomplex, and RPP21, POP4 and RPP38 form the 'wrist' subcomplex. All subunits of the RNase P complex interact with the catalytic RNA. Several subunits of RNase P are also part of the RNase MRP complex. RNase MRP consists of a catalytic RNA moiety and about 8 protein subunits; POP1, POP7, RPP25, RPP30, RPP38, RPP40 and possibly also POP4 and POP5.

It is found in the nucleus. The protein localises to the nucleolus. Component of ribonuclease P, a ribonucleoprotein complex that generates mature tRNA molecules by cleaving their 5'-ends. This is Ribonuclease P protein subunit p29 (POP4) from Pongo abelii (Sumatran orangutan).